Reading from the N-terminus, the 457-residue chain is Chromosomal replication initiator protein DnaA (457 aa).

Residues 1–81 (MERDLSQLWQ…NNTDLVIKVQ (81 aa)) form a domain I, interacts with DnaA modulators region. Residues 81–119 (QEGSKPAARKVVAQQEIANTPVQHSAPMPENEPQAAFRS) form a domain II region. Positions 120–337 (NLNQHHLFEN…GALNRVHANA (218 aa)) are domain III, AAA+ region. Gly165, Gly167, Lys168, and Thr169 together coordinate ATP. Positions 338-457 (DFTGKAITID…WSNLIRTLSA (120 aa)) are domain IV, binds dsDNA.

This sequence belongs to the DnaA family. As to quaternary structure, oligomerizes as a right-handed, spiral filament on DNA at oriC.

The protein localises to the cytoplasm. Functionally, plays an essential role in the initiation and regulation of chromosomal replication. ATP-DnaA binds to the origin of replication (oriC) to initiate formation of the DNA replication initiation complex once per cell cycle. Binds the DnaA box (a 9 base pair repeat at the origin) and separates the double-stranded (ds)DNA. Forms a right-handed helical filament on oriC DNA; dsDNA binds to the exterior of the filament while single-stranded (ss)DNA is stabiized in the filament's interior. The ATP-DnaA-oriC complex binds and stabilizes one strand of the AT-rich DNA unwinding element (DUE), permitting loading of DNA polymerase. After initiation quickly degrades to an ADP-DnaA complex that is not apt for DNA replication. Binds acidic phospholipids. The chain is Chromosomal replication initiator protein DnaA from Mannheimia succiniciproducens (strain KCTC 0769BP / MBEL55E).